The sequence spans 650 residues: 1-deoxy-D-xylulose-5-phosphate synthase (650 aa).

Thiamine diphosphate contacts are provided by residues His73 and 114–116; that span reads SHA. Asp145 is a Mg(2+) binding site. Thiamine diphosphate is bound by residues 146-147, Asn174, Tyr285, and Glu367; that span reads GA. Position 174 (Asn174) interacts with Mg(2+). Residues 631 to 650 form a disordered region; sequence MGDEVGADESNQTPAGGGQA.

This sequence belongs to the transketolase family. DXPS subfamily. As to quaternary structure, homodimer. The cofactor is Mg(2+). It depends on thiamine diphosphate as a cofactor.

It catalyses the reaction D-glyceraldehyde 3-phosphate + pyruvate + H(+) = 1-deoxy-D-xylulose 5-phosphate + CO2. It functions in the pathway metabolic intermediate biosynthesis; 1-deoxy-D-xylulose 5-phosphate biosynthesis; 1-deoxy-D-xylulose 5-phosphate from D-glyceraldehyde 3-phosphate and pyruvate: step 1/1. Functionally, catalyzes the acyloin condensation reaction between C atoms 2 and 3 of pyruvate and glyceraldehyde 3-phosphate to yield 1-deoxy-D-xylulose-5-phosphate (DXP). The sequence is that of 1-deoxy-D-xylulose-5-phosphate synthase from Parafrankia sp. (strain EAN1pec).